The chain runs to 199 residues: MSSGNAYIGKLAPDFQATAVMPDGQFKEIKLSDYKGKYVVLFFYPLDFTFVCPTEIIAFSDRSEEFRKINCEVIGASVDSHFCHLAWINTPKKQGGLGSMHIPLVSDTKRVIAKDYGILKEDEGISYRGLFIIDDKGTLRQITINDLPVGRSVDETLRLVQAFQFTDKHGEVCPAGWQPGSDTIKPDVQKSKEYFSKHK.

The Thioredoxin domain occupies 6–165 (AYIGKLAPDF…TLRLVQAFQF (160 aa)). Cys-52 (cysteine sulfenic acid (-SOH) intermediate) is an active-site residue.

This sequence belongs to the peroxiredoxin family. AhpC/Prx1 subfamily. As to quaternary structure, homodimer; disulfide-linked, upon oxidation. 5 homodimers assemble to form a ring-like decamer. Interacts with GDPD5; forms a mixed-disulfide with GDPD5. Interacts with SESN1 and SESN2. Interacts with FAM107A. In terms of processing, the enzyme can be inactivated by further oxidation of the cysteine sulfenic acid (C(P)-SOH) to sulphinic acid (C(P)-SO2H) instead of its condensation to a disulfide bond. It can be reactivated by forming a transient disulfide bond with sulfiredoxin SRXN1, which reduces the cysteine sulfinic acid in an ATP- and Mg-dependent manner.

It is found in the cytoplasm. The enzyme catalyses a hydroperoxide + [thioredoxin]-dithiol = an alcohol + [thioredoxin]-disulfide + H2O. Functionally, thiol-specific peroxidase that catalyzes the reduction of hydrogen peroxide and organic hydroperoxides to water and alcohols, respectively. Plays a role in cell protection against oxidative stress by detoxifying peroxides and as sensor of hydrogen peroxide-mediated signaling events. Might participate in the signaling cascades of growth factors and tumor necrosis factor-alpha by regulating the intracellular concentrations of H(2)O(2). Reduces an intramolecular disulfide bond in GDPD5 that gates the ability to GDPD5 to drive postmitotic motor neuron differentiation. The chain is Peroxiredoxin-1 (PRDX1) from Gekko japonicus (Schlegel's Japanese gecko).